Here is a 175-residue protein sequence, read N- to C-terminus: Large ribosomal subunit protein uL10 (175 aa).

This sequence belongs to the universal ribosomal protein uL10 family. As to quaternary structure, part of the ribosomal stalk of the 50S ribosomal subunit. The N-terminus interacts with L11 and the large rRNA to form the base of the stalk. The C-terminus forms an elongated spine to which L12 dimers bind in a sequential fashion forming a multimeric L10(L12)X complex.

Forms part of the ribosomal stalk, playing a central role in the interaction of the ribosome with GTP-bound translation factors. The chain is Large ribosomal subunit protein uL10 from Synechococcus sp. (strain CC9311).